Consider the following 193-residue polypeptide: Putative RNA methyltransferase At5g10620 (193 aa).

S-adenosyl-L-methionine-binding positions include Leu-110, Gly-142, and 161-166 (LSSMVL).

This sequence belongs to the RNA methyltransferase RlmH family.

This chain is Putative RNA methyltransferase At5g10620, found in Arabidopsis thaliana (Mouse-ear cress).